Here is a 350-residue protein sequence, read N- to C-terminus: Flap endonuclease 1 (350 aa).

Positions 1–102 (MGVTALRELI…REIERRQKLK (102 aa)) are N-domain. 7 residues coordinate Mg(2+): D31, D84, E156, E158, D177, D179, and D240. Residues 120–261 (EARKYAQMSA…TALRYVKSYG (142 aa)) form an I-domain region. The interval 339-347 (KQSTLDMFF) is interaction with PCNA.

The protein belongs to the XPG/RAD2 endonuclease family. FEN1 subfamily. In terms of assembly, interacts with PCNA. PCNA stimulates the nuclease activity without altering cleavage specificity. Requires Mg(2+) as cofactor.

Functionally, structure-specific nuclease with 5'-flap endonuclease and 5'-3' exonuclease activities involved in DNA replication and repair. During DNA replication, cleaves the 5'-overhanging flap structure that is generated by displacement synthesis when DNA polymerase encounters the 5'-end of a downstream Okazaki fragment. Binds the unpaired 3'-DNA end and kinks the DNA to facilitate 5' cleavage specificity. Cleaves one nucleotide into the double-stranded DNA from the junction in flap DNA, leaving a nick for ligation. Also involved in the base excision repair (BER) pathway. Acts as a genome stabilization factor that prevents flaps from equilibrating into structures that lead to duplications and deletions. Also possesses 5'-3' exonuclease activity on nicked or gapped double-stranded DNA. This chain is Flap endonuclease 1, found in Ignicoccus hospitalis (strain KIN4/I / DSM 18386 / JCM 14125).